The chain runs to 683 residues: U4/U6 small nuclear ribonucleoprotein Prp3 (683 aa).

The region spanning 1–87 is the PWI domain; sequence MALSKRELDE…HSKSSSDRSR (87 aa). The span at 73–107 shows a compositional bias: basic and acidic residues; it reads GRSSRHSKSSSDRSRKRELKEVFGDDSEISKESSG. The disordered stretch occupies residues 73-135; it reads GRSSRHSKSS…IPGPPSESPG (63 aa). Lys-139 participates in a covalent cross-link: Glycyl lysine isopeptide (Lys-Gly) (interchain with G-Cter in SUMO2). The segment at 153–183 is disordered; sequence IEERKKQLSFISPPTPQPKTPSSSQPERLPI. Residue Ser-164 is modified to Phosphoserine. Thr-167 carries the phosphothreonine modification. Residues Lys-244 and Lys-252 each participate in a glycyl lysine isopeptide (Lys-Gly) (interchain with G-Cter in SUMO2) cross-link. The interval 416–550 is mediates interaction with SART3; it reads NLVEHPAQLN…VHISVYRVRN (135 aa). Residue Ser-619 is modified to Phosphoserine.

As to quaternary structure, component of the precatalytic spliceosome (spliceosome B complex). Component of the U4/U6-U5 tri-snRNP complex, a building block of the precatalytic spliceosome (spliceosome B complex). The U4/U6-U5 tri-snRNP complex is composed of the U4, U6 and U5 snRNAs and at least PRPF3, PRPF4, PRPF6, PRPF8, PRPF31, SNRNP200, TXNL4A, SNRNP40, SNRPB, SNRPD1, SNRPD2, SNRPD3, SNRPE, SNRPF, SNRPG, DDX23, CD2BP2, PPIH, SNU13, EFTUD2, SART1 and USP39, plus LSM2, LSM3, LSM4, LSM5, LSM6, LSM7 and LSM8. Interacts directly with PRPF4. Part of a heteromeric complex containing PPIH, PRPF3 and PRPF4 that is stable in the absence of RNA. Interacts with SART3; the interaction is direct and recruits the deubiquitinase USP4 to PRPF3. Interacts with PRPF19. Interacts ('Lys-63'-linked polyubiquitinated) with PRPF8 (via the MPN (JAB/Mov34) domain); may stabilize the U4/U6-U5 tri-snRNP complex. Interacts with ERCC6. Ubiquitinated. Undergoes 'Lys-63'-linked polyubiquitination by PRPF19 and deubiquitination by USP4. 'Lys-63'-linked ubiquitination increases the affinity for PRPF8 and may regulate the assembly of the U4/U6-U5 tri-snRNP complex. In terms of tissue distribution, highly expressed in retina, liver, kidney and blood. Detected at lower levels in heart and brain.

It is found in the nucleus. The protein localises to the nucleus speckle. Its function is as follows. Plays a role in pre-mRNA splicing as component of the U4/U6-U5 tri-snRNP complex that is involved in spliceosome assembly, and as component of the precatalytic spliceosome (spliceosome B complex). The polypeptide is U4/U6 small nuclear ribonucleoprotein Prp3 (PRPF3) (Homo sapiens (Human)).